Consider the following 297-residue polypeptide: Thiosulfate sulfurtransferase (297 aa).

At lysine 14 the chain carries N6-acetyllysine; alternate. Lysine 14 is subject to N6-succinyllysine; alternate. Positions valine 25 to serine 143 constitute a Rhodanese 1 domain. O-linked (GlcNAc) serine glycosylation is present at serine 35. Serine 38 is subject to Phosphoserine. N6-acetyllysine; alternate is present on lysine 136. Position 136 is an N6-succinyllysine; alternate (lysine 136). A hinge region spans residues glutamate 144–arginine 159. Position 163 is an N6-acetyllysine (lysine 163). Residues glutamine 173 to arginine 288 form the Rhodanese 2 domain. Residue lysine 175 is modified to N6-acetyllysine; alternate. N6-succinyllysine; alternate is present on lysine 175. Arginine 187 serves as a coordination point for substrate. N6-acetyllysine; alternate is present on lysine 224. Lysine 224 carries the N6-succinyllysine; alternate modification. N6-acetyllysine is present on lysine 236. Residue lysine 237 is modified to N6-acetyllysine; alternate. Lysine 237 carries the post-translational modification N6-succinyllysine; alternate. Cysteine 248 acts as the Cysteine persulfide intermediate in catalysis. A substrate-binding site is contributed by lysine 250.

As to quaternary structure, monomer. Expressed in numerous tissues.

It is found in the mitochondrion matrix. It catalyses the reaction thiosulfate + hydrogen cyanide = thiocyanate + sulfite + 2 H(+). Together with MRPL18, acts as a mitochondrial import factor for the cytosolic 5S rRNA. Only the nascent unfolded cytoplasmic form is able to bind to the 5S rRNA. Involved in the formation of iron-sulfur complexes, cyanide detoxification or modification of sulfur-containing enzymes. Other thiol compounds, besides cyanide, can act as sulfur ion acceptors. Also has weak mercaptopyruvate sulfurtransferase (MST) activity. The sequence is that of Thiosulfate sulfurtransferase (Tst) from Rattus norvegicus (Rat).